Reading from the N-terminus, the 601-residue chain is Elongation factor 4 (601 aa).

Residues 6-188 (NYIRNFSIVA…AIVTQLPSPR (183 aa)) form the tr-type G domain. GTP is bound by residues 18 to 23 (DHGKST) and 135 to 138 (NKVD).

Belongs to the TRAFAC class translation factor GTPase superfamily. Classic translation factor GTPase family. LepA subfamily.

The protein resides in the cell inner membrane. It carries out the reaction GTP + H2O = GDP + phosphate + H(+). In terms of biological role, required for accurate and efficient protein synthesis under certain stress conditions. May act as a fidelity factor of the translation reaction, by catalyzing a one-codon backward translocation of tRNAs on improperly translocated ribosomes. Back-translocation proceeds from a post-translocation (POST) complex to a pre-translocation (PRE) complex, thus giving elongation factor G a second chance to translocate the tRNAs correctly. Binds to ribosomes in a GTP-dependent manner. In Bartonella henselae (strain ATCC 49882 / DSM 28221 / CCUG 30454 / Houston 1) (Rochalimaea henselae), this protein is Elongation factor 4.